The following is a 369-amino-acid chain: Histone deacetylase 8 (369 aa).

Residues 5 to 316 (LLPVYIHSAE…WTYLTALIVG (312 aa)) form a histone deacetylase region. Asp-93 is a binding site for substrate. The Proton acceptor role is filled by His-135. Gly-143 provides a ligand contact to substrate. 3 residues coordinate a divalent metal cation: Asp-170, His-172, and Asp-259. Tyr-298 contacts substrate.

It belongs to the histone deacetylase family. HD type 1 subfamily. A divalent metal cation is required as a cofactor.

Its subcellular location is the nucleus. It localises to the chromosome. The protein localises to the cytoplasm. It catalyses the reaction N(6)-acetyl-L-lysyl-[histone] + H2O = L-lysyl-[histone] + acetate. It carries out the reaction N(6)-acetyl-L-lysyl-[protein] + H2O = L-lysyl-[protein] + acetate. The enzyme catalyses N(6)-(2E)-butenoyl-L-lysyl-[protein] + H2O = (2E)-2-butenoate + L-lysyl-[protein]. Its activity is inhibited by trichostatin A (TSA) and butyrate, 2 well known histone deacetylase inhibitors. In terms of biological role, histone deacetylase that catalyzes the deacetylation of lysine residues on the N-terminal part of the core histones (H2A, H2B, H3 and H4). Histone deacetylation gives a tag for epigenetic repression and plays an important role in transcriptional regulation, cell cycle progression and developmental events. Histone deacetylases act via the formation of large multiprotein complexes. Also involved in the deacetylation of non-histone proteins. In addition to protein deacetylase activity, also has protein-lysine deacylase activity: acts as a protein decrotonylase by mediating decrotonylation ((2E)-butenoyl) of histones. This Xenopus tropicalis (Western clawed frog) protein is Histone deacetylase 8 (hdac8).